Here is a 492-residue protein sequence, read N- to C-terminus: Glutamyl-tRNA(Gln) amidotransferase subunit A (492 aa).

Catalysis depends on charge relay system residues Lys-78 and Ser-158. Residue Ser-182 is the Acyl-ester intermediate of the active site.

Belongs to the amidase family. GatA subfamily. Heterotrimer of A, B and C subunits.

It carries out the reaction L-glutamyl-tRNA(Gln) + L-glutamine + ATP + H2O = L-glutaminyl-tRNA(Gln) + L-glutamate + ADP + phosphate + H(+). In terms of biological role, allows the formation of correctly charged Gln-tRNA(Gln) through the transamidation of misacylated Glu-tRNA(Gln) in organisms which lack glutaminyl-tRNA synthetase. The reaction takes place in the presence of glutamine and ATP through an activated gamma-phospho-Glu-tRNA(Gln). This is Glutamyl-tRNA(Gln) amidotransferase subunit A from Orientia tsutsugamushi (strain Ikeda) (Rickettsia tsutsugamushi).